The sequence spans 469 residues: Glutamine synthetase (469 aa).

In terms of domain architecture, GS beta-grasp spans 12–97 (HDVKWVDLRF…LVCDIIEPST (86 aa)). The GS catalytic domain maps to 105-469 (PRNIAKRAEE…PLEYDLYYSV (365 aa)). Residues Glu-130 and Glu-132 each coordinate Mg(2+). Residue Glu-208 participates in ATP binding. Mg(2+) is bound by residues Glu-213 and Glu-221. Residues 265–266 (NG) and Gly-266 each bind L-glutamate. Mg(2+) is bound at residue His-270. Residues 272–274 (HMS) and Ser-274 contribute to the ATP site. Arg-322, Glu-328, and Arg-340 together coordinate L-glutamate. ATP-binding residues include Arg-340, Arg-345, and Lys-353. Glu-358 contacts Mg(2+). L-glutamate is bound at residue Arg-360. Tyr-398 carries the post-translational modification O-AMP-tyrosine.

Belongs to the glutamine synthetase family. Oligomer of 12 subunits arranged in the form of two hexameric ring. It depends on Mg(2+) as a cofactor.

Its subcellular location is the cytoplasm. The catalysed reaction is L-glutamate + NH4(+) + ATP = L-glutamine + ADP + phosphate + H(+). The activity of this enzyme could be controlled by adenylation under conditions of abundant glutamine. Its function is as follows. Catalyzes the ATP-dependent biosynthesis of glutamine from glutamate and ammonia. This chain is Glutamine synthetase, found in Pseudomonas aeruginosa (strain ATCC 15692 / DSM 22644 / CIP 104116 / JCM 14847 / LMG 12228 / 1C / PRS 101 / PAO1).